The chain runs to 242 residues: MRCFKATIAYDGAYFLGYAKQPNKLGVQDKIESALNALGIKSVVVAAGRTDKGVHANNQTLSFHAPKHWNAAKLFYCLAPKLAPHIVLKKLEEKNFHARFDAQKRAYRYLLTKNLKTPFLAPYIACGDYGSLDALNTALKQFTGKHDFSLFKKEGGATTNPKRAIFNAFAYKTFIIGHECVVFKIIGDAFLRSSVRLIIQACVQYSLEKITLAEIEMQIHNLKATIRTPIMANGLYLHRVYY.

D51 (nucleophile) is an active-site residue. Y107 provides a ligand contact to substrate.

It belongs to the tRNA pseudouridine synthase TruA family. As to quaternary structure, homodimer.

It carries out the reaction uridine(38/39/40) in tRNA = pseudouridine(38/39/40) in tRNA. Its function is as follows. Formation of pseudouridine at positions 38, 39 and 40 in the anticodon stem and loop of transfer RNAs. This is tRNA pseudouridine synthase A from Helicobacter pylori (strain G27).